Reading from the N-terminus, the 271-residue chain is ATP-dependent Clp protease proteolytic subunit 6, chloroplastic (271 aa).

Residues 1–30 are disordered; it reads MAGLAISPPLGLSFSSRTRNPKPTSFLSHN. The N-terminal 77 residues, 1-77, are a transit peptide targeting the chloroplast; it reads MAGLAISPPL…KAPRFGVIEA (77 aa). Residues 13–30 show a composition bias toward polar residues; sequence SFSSRTRNPKPTSFLSHN. Ser175 serves as the catalytic Nucleophile. His200 is an active-site residue.

This sequence belongs to the peptidase S14 family. In terms of assembly, component of the chloroplastic Clp protease core complex which consist of at least 16 proteins: CLPP4 (3 copies), CLPP5 (3 copies), CLPR4 (2 copies), ClpP1 (1 copy), CLPP6 (1 copy), CLPR2 (1 copy), CLPT1 (1 copy), CLPT2 (1 copy) and 3 copies of CLPP3 and/or CLPR1 and/or CLPR3. The core complex is organized in two heptameric rings, one containing CLPP3,4,5,6 in a 1:2:3:1 ratio and the other CLPP1 and CLPR1,2,3,4 in a 3:1:1:1:1 ratio. As to expression, mostly expressed in leaves. Also detected in stems, and to a lower extent, in roots (at protein level).

Its subcellular location is the plastid. It is found in the chloroplast stroma. The enzyme catalyses Hydrolysis of proteins to small peptides in the presence of ATP and magnesium. alpha-casein is the usual test substrate. In the absence of ATP, only oligopeptides shorter than five residues are hydrolyzed (such as succinyl-Leu-Tyr-|-NHMec, and Leu-Tyr-Leu-|-Tyr-Trp, in which cleavage of the -Tyr-|-Leu- and -Tyr-|-Trp bonds also occurs).. Cleaves peptides in various proteins in a process that requires ATP hydrolysis. Has a chymotrypsin-like activity. Plays a major role in the degradation of misfolded proteins. Essential protein required for chloroplast development and integrity. This chain is ATP-dependent Clp protease proteolytic subunit 6, chloroplastic, found in Arabidopsis thaliana (Mouse-ear cress).